Reading from the N-terminus, the 240-residue chain is Ubiquinone biosynthesis O-methyltransferase (240 aa).

S-adenosyl-L-methionine is bound by residues arginine 44, glycine 64, aspartate 85, and methionine 129.

Belongs to the methyltransferase superfamily. UbiG/COQ3 family.

It catalyses the reaction a 3-demethylubiquinol + S-adenosyl-L-methionine = a ubiquinol + S-adenosyl-L-homocysteine + H(+). The enzyme catalyses a 3-(all-trans-polyprenyl)benzene-1,2-diol + S-adenosyl-L-methionine = a 2-methoxy-6-(all-trans-polyprenyl)phenol + S-adenosyl-L-homocysteine + H(+). It participates in cofactor biosynthesis; ubiquinone biosynthesis. Functionally, O-methyltransferase that catalyzes the 2 O-methylation steps in the ubiquinone biosynthetic pathway. In Escherichia coli O7:K1 (strain IAI39 / ExPEC), this protein is Ubiquinone biosynthesis O-methyltransferase.